Here is a 300-residue protein sequence, read N- to C-terminus: MTKESKDMDCYLRRLKQELMSMKEVGDGLQDQMNCMMGALQELKLLQVQTALEQLEISGGTPTFSCPESSQEQPECPRWQGSGGPAGPAAWTSSSQPSFDSSPKLPCRRSVCGKELAVLPKTQLPEEHQSCTQQGTEWVEPDDWTSTLMSRGRNRQPLVLGDNVFADLVGNWLDLPELEKGGEKGETGGSIEPKGEKGQSRELGRKFALTANIFRKFLRSVRPDRDRLLKEKPGWMTPMVSESRAGRSKKVKKRSLSKGSGRFPFSSTGEPRHIETPATSSPKALEPSCRGFDINTAVWV.

Disordered stretches follow at residues 59 to 104 (GGTP…SSPK), 178 to 201 (LEKG…GQSR), and 230 to 288 (KEKP…LEPS). Residues 60–73 (GTPTFSCPESSQEQ) show a composition bias toward polar residues. Positions 93–102 (SSSQPSFDSS) are enriched in low complexity. Positions 140 to 183 (EPDDWTSTLMSRGRNRQPLVLGDNVFADLVGNWLDLPELEKGGE) are inka box. Residues 246-256 (GRSKKVKKRSL) are compositionally biased toward basic residues.

The protein belongs to the INKA family. Interacts with PAK4. As to expression, enriched in the nervous system.

Its subcellular location is the nucleus. In terms of biological role, inhibitor of the serine/threonine-protein kinase PAK4. Acts by binding PAK4 in a substrate-like manner, inhibiting the protein kinase activity. This Mus musculus (Mouse) protein is PAK4-inhibitor INKA2.